The sequence spans 185 residues: Peptide deformylase (185 aa).

C94 and H136 together coordinate Fe cation. E137 is a catalytic residue. A Fe cation-binding site is contributed by H140.

It belongs to the polypeptide deformylase family. It depends on Fe(2+) as a cofactor.

The enzyme catalyses N-terminal N-formyl-L-methionyl-[peptide] + H2O = N-terminal L-methionyl-[peptide] + formate. In terms of biological role, removes the formyl group from the N-terminal Met of newly synthesized proteins. Requires at least a dipeptide for an efficient rate of reaction. N-terminal L-methionine is a prerequisite for activity but the enzyme has broad specificity at other positions. This Chlorobium phaeobacteroides (strain BS1) protein is Peptide deformylase.